A 107-amino-acid polypeptide reads, in one-letter code: UPF0102 protein Tlet_0667 (107 aa).

Belongs to the UPF0102 family.

The protein is UPF0102 protein Tlet_0667 of Pseudothermotoga lettingae (strain ATCC BAA-301 / DSM 14385 / NBRC 107922 / TMO) (Thermotoga lettingae).